A 165-amino-acid polypeptide reads, in one-letter code: Large ribosomal subunit protein eL15 (165 aa).

A disordered region spans residues 126 to 147 (TSAGRKSRGLGKGHKFHHTIGG). Residues 130-143 (RKSRGLGKGHKFHH) are compositionally biased toward basic residues.

The protein belongs to the eukaryotic ribosomal protein eL15 family. In terms of assembly, component of the large ribosomal subunit.

The protein resides in the cytoplasm. Its function is as follows. Component of the large ribosomal subunit. The ribosome is a large ribonucleoprotein complex responsible for the synthesis of proteins in the cell. This Gallus gallus (Chicken) protein is Large ribosomal subunit protein eL15 (RPL15).